A 643-amino-acid chain; its full sequence is 3D-(3,5/4)-trihydroxycyclohexane-1,2-dione hydrolase (643 aa).

Position 65 (glutamate 65) interacts with thiamine diphosphate. Residues 441-521 are thiamine pyrophosphate binding; that stretch reads SLPGDLQRMW…VNVLLFDNCG (81 aa). Mg(2+) is bound by residues aspartate 492 and asparagine 519.

Belongs to the TPP enzyme family. Mg(2+) serves as cofactor. Requires thiamine diphosphate as cofactor.

It carries out the reaction 3D-3,5/4-trihydroxycyclohexane-1,2-dione + H2O = 5-deoxy-D-glucuronate + H(+). It functions in the pathway polyol metabolism; myo-inositol degradation into acetyl-CoA; acetyl-CoA from myo-inositol: step 3/7. Involved in the cleavage of the C1-C2 bond of 3D-(3,5/4)-trihydroxycyclohexane-1,2-dione (THcHDO) to yield 5-deoxy-glucuronate (5DG). The protein is 3D-(3,5/4)-trihydroxycyclohexane-1,2-dione hydrolase of Clostridium botulinum (strain Eklund 17B / Type B).